Reading from the N-terminus, the 321-residue chain is Torsin-2A (321 aa).

An N-terminal signal peptide occupies residues 1–26 (MAAATRGCRPWGSLLGLLGLVSAAAA). 93-100 (GWTGTGKS) serves as a coordination point for ATP. The N-linked (GlcNAc...) asparagine glycan is linked to N149.

The protein belongs to the ClpA/ClpB family. Torsin subfamily. As to quaternary structure, homohexamer. Interacts with TOR1AIP1. In terms of tissue distribution, isoform 1 is expressed ubiquitously, except in cardiac and endothelial tissues.

The protein localises to the endoplasmic reticulum lumen. In Homo sapiens (Human), this protein is Torsin-2A (TOR2A).